Consider the following 479-residue polypeptide: MNYLNENIDSLNKKLQDGEITAEDLAKETVKNIKETDKKINAWITVDEEAKPAENLDFNKNKLAGIPIAIKDNIITNGMKTTAASHILYNYMPVYDATVISKLKKAQATFVGKTNMDEFAMGSSTEHSYYGETHNPWNLDKVPGGSSGGSAAAVASGEVVAALGSDTGGSIRQPAAFNGIFGIKPTYGRVSRWGLIAFGSSLDQIGVMSKRVKDSAEVLNVIAGPDEHDATVSEQEVPDYTSFLGQDVKGLRVAVPKEYMDAVDGEMREVIQKQIDVLKDAGAIINEVSLPHTKYVVPTYYIVASSEASSNLQRYDGIRYGYRAKDTKNLLDVYVKSRSEGFGDEVKRRIMLGSFALSAGAYDEFFKKAAQVRTLICRDFEKIFEENDVIVGPTTTEPAFGIGEEISDPIKMYNNDLLTISANLAGIPAASVPAGLVDGMPAGLQIMAKRFDEGNVFKVADFIERNNKFYEKTPTGMED.

Catalysis depends on charge relay system residues K71 and S146. Catalysis depends on S170, which acts as the Acyl-ester intermediate.

It belongs to the amidase family. GatA subfamily. As to quaternary structure, heterotrimer of A, B and C subunits.

The enzyme catalyses L-glutamyl-tRNA(Gln) + L-glutamine + ATP + H2O = L-glutaminyl-tRNA(Gln) + L-glutamate + ADP + phosphate + H(+). In terms of biological role, allows the formation of correctly charged Gln-tRNA(Gln) through the transamidation of misacylated Glu-tRNA(Gln) in organisms which lack glutaminyl-tRNA synthetase. The reaction takes place in the presence of glutamine and ATP through an activated gamma-phospho-Glu-tRNA(Gln). The polypeptide is Glutamyl-tRNA(Gln) amidotransferase subunit A (Lactobacillus johnsonii (strain CNCM I-12250 / La1 / NCC 533)).